The following is a 148-amino-acid chain: Large ribosomal subunit protein bL9 (148 aa).

It belongs to the bacterial ribosomal protein bL9 family.

Functionally, binds to the 23S rRNA. This is Large ribosomal subunit protein bL9 from Parafrankia sp. (strain EAN1pec).